The primary structure comprises 396 residues: Elongation factor Tu (396 aa).

Positions 11–205 (KPHVNIGTIG…VVDEYIPTPK (195 aa)) constitute a tr-type G domain. Residues 20–27 (GHVDHGKT) form a G1 region. 20 to 27 (GHVDHGKT) is a GTP binding site. Thr-27 is a Mg(2+) binding site. Positions 61-65 (GITIN) are G2. Positions 82–85 (DAPG) are G3. Residues 82–86 (DAPGH) and 137–140 (NKTD) contribute to the GTP site. A G4 region spans residues 137–140 (NKTD). The tract at residues 175–177 (SAL) is G5.

Belongs to the TRAFAC class translation factor GTPase superfamily. Classic translation factor GTPase family. EF-Tu/EF-1A subfamily. Monomer.

The protein localises to the cytoplasm. It catalyses the reaction GTP + H2O = GDP + phosphate + H(+). Functionally, GTP hydrolase that promotes the GTP-dependent binding of aminoacyl-tRNA to the A-site of ribosomes during protein biosynthesis. The polypeptide is Elongation factor Tu (Limosilactobacillus fermentum (strain NBRC 3956 / LMG 18251) (Lactobacillus fermentum)).